A 617-amino-acid chain; its full sequence is Diacylglycerol O-acyltransferase 1 (617 aa).

Disordered stretches follow at residues 1-52 (MEPI…ETER) and 95-186 (RNTN…PKQE). Residues 7–17 (SNGNKNNSMDK) show a composition bias toward polar residues. Composition is skewed to low complexity over residues 18-34 (QPQQ…QQQQ) and 96-105 (NTNNNNQNNT). Residues 106-140 (SPTFSSANGKQSNLTQRKINTQIQSKQPTNNNVQP) show a composition bias toward polar residues. The segment covering 160–177 (QNNNGNNNNNNNNNNNNN) has biased composition (low complexity). The next 5 membrane-spanning stretches (helical) occupy residues 217–237 (LLLI…HLLY), 254–274 (WPGV…YLIE), 306–326 (IIAF…ICTF), 399–419 (IVEA…YMLP), and 449–469 (YVWL…VAEI). The FYXDWWN motif signature appears at 477-483 (FYRDWWN). The next 3 helical transmembrane spans lie at 520–540 (GYFM…SIPF), 545–565 (LWGF…KNLM), and 570–590 (LGNV…VLLY). Residue His-532 is part of the active site.

This sequence belongs to the membrane-bound acyltransferase family. Sterol o-acyltransferase subfamily.

The protein resides in the endoplasmic reticulum membrane. It carries out the reaction an acyl-CoA + a 1,2-diacyl-sn-glycerol = a triacyl-sn-glycerol + CoA. The enzyme catalyses all-trans-retinol + an acyl-CoA = an all-trans-retinyl ester + CoA. The catalysed reaction is 2-(9Z-octadecenoyl)-glycerol + (9Z)-octadecenoyl-CoA = 1,2-di-(9Z-octadecenoyl)-sn-glycerol + CoA. It catalyses the reaction 1,2-di-(9Z-octadecenoyl)-sn-glycerol + (9Z)-octadecenoyl-CoA = 1,2,3-tri-(9Z-octadecenoyl)-glycerol + CoA. It carries out the reaction all-trans-retinol + hexadecanoyl-CoA = all-trans-retinyl hexadecanoate + CoA. The enzyme catalyses 1-O-(9Z-octadecenyl)-glycerol + (9Z)-octadecenoyl-CoA = 1-O-(9Z-octadecyl)-3-(9Z-octadecenoyl)-glycerol + CoA. The catalysed reaction is 1-O-(9Z-octadecyl)-3-(9Z-octadecenoyl)-glycerol + (9Z)-octadecenoyl-CoA = 1-O-(9Z-octadecenyl)-2,3-di-(9Z-octadecenoyl)glycerol + CoA. It catalyses the reaction 1-(9Z-octadecenoyl)-glycerol + (9Z)-octadecenoyl-CoA = 1,2-di-(9Z-octadecenoyl)-glycerol + CoA. It carries out the reaction 1,2-di-(9Z-octadecenoyl)-glycerol + (9Z)-octadecenoate + H(+) = 1,2,3-tri-(9Z-octadecenoyl)-glycerol + H2O. The enzyme catalyses 1-octadecanoyl-2-(5Z,8Z,11Z,14Z-eicosatetraenoyl)-sn-glycerol + (9Z)-octadecenoyl-CoA = 1-octadecanoyl-2-(5Z,8Z,11Z,14Z)-eicosatetraenoyl-3-(9Z)-octadecenoyl-sn-glycerol + CoA. The catalysed reaction is hexadecane-1,2-diol + 2 hexadecanoyl-CoA = 1,2-O,O-dihexadecanoyl-1,2-hexadecanediol + 2 CoA. It catalyses the reaction hexadecane-1,2-diol + hexadecanoyl-CoA = 2-hydroxyhexadecyl hexadecanoate + CoA. It carries out the reaction 2-(9Z-octadecenoyl)-glycerol + hexadecanoyl-CoA = 1-hexadecanoyl-2-(9Z-octadecenoyl)-sn-glycerol + CoA. The enzyme catalyses 1,2-di-(9Z-octadecenoyl)-sn-glycerol + hexadecanoyl-CoA = 1,2-di-(9Z)-octadecenoyl-3-hexadecanoyl-sn-glycerol + CoA. The catalysed reaction is hexadecan-1-ol + hexadecanoyl-CoA = hexadecanyl hexadecanoate + CoA. It catalyses the reaction 13-cis-retinol + hexadecanoyl-CoA = 13-cis-retinyl hexadecanoate + CoA. It carries out the reaction 1,3-di-(9Z-octadecenoyl)-glycerol + (9Z)-octadecenoyl-CoA = 1,2,3-tri-(9Z-octadecenoyl)-glycerol + CoA. The enzyme catalyses 2,3-di-(9Z)-octadecenoyl-sn-glycerol + (9Z)-octadecenoyl-CoA = 1,2,3-tri-(9Z-octadecenoyl)-glycerol + CoA. It functions in the pathway lipid metabolism; glycerolipid metabolism. In terms of biological role, catalyzes the terminal and only committed step in triacylglycerol synthesis by using diacylglycerol and fatty acyl CoA as substrates. The polypeptide is Diacylglycerol O-acyltransferase 1 (dgat1) (Dictyostelium discoideum (Social amoeba)).